Consider the following 883-residue polypeptide: Protein SEY1 homolog (883 aa).

The Cytoplasmic segment spans residues 1–795 (MQMDRKTQII…ETGGKMSLKN (795 aa)). A GB1/RHD3-type G domain is found at 33 to 279 (GFNYNVVAIL…IPSDGFAHYC (247 aa)). Position 43–50 (43–50 (GSQSSGKS)) interacts with GTP. Positions 673–693 (LDEIMDVLKSKLDEISDNLSS) form a coiled coil. Residues 796–816 (VPLFFWVILLILGWNELLFFI) traverse the membrane as a helical segment. The Lumenal portion of the chain corresponds to 817–819 (RFF). A helical membrane pass occupies residues 820 to 840 (FRLNIILPLFLAAAVILSTLF). Residues 841–883 (FNGNMEVLSTINKVVFFLAKSSFGFYRQLQTMGEKVAQVPTAD) are Cytoplasmic-facing.

It belongs to the TRAFAC class dynamin-like GTPase superfamily. GB1/RHD3 GTPase family. RHD3 subfamily.

The protein localises to the endoplasmic reticulum membrane. In terms of biological role, probable GTP-binding protein involved in generating and maintaining the structure of the tubular endoplasmic reticulum network. In Plasmodium knowlesi (strain H), this protein is Protein SEY1 homolog.